The sequence spans 449 residues: Probable ubiquitin carboxyl-terminal hydrolase 8 (449 aa).

A UBP-type zinc finger spans residues 6–113; that stretch reads EGCQHLKLKP…FKIKNIKAWQ (108 aa). Residues cysteine 8, histidine 10, cysteine 38, cysteine 41, cysteine 51, cysteine 54, cysteine 59, histidine 64, histidine 68, histidine 74, cysteine 87, and cysteine 90 each coordinate Zn(2+). The region spanning 145–435 is the USP domain; that stretch reads RGIQNLGATC…QAYLLFYHER (291 aa). Cysteine 154 functions as the Nucleophile in the catalytic mechanism. Residues histidine 178, cysteine 183, cysteine 188, cysteine 191, histidine 246, cysteine 257, cysteine 259, histidine 262, cysteine 275, cysteine 278, cysteine 317, and cysteine 320 each contribute to the Zn(2+) site. Residue histidine 395 is the Proton acceptor of the active site.

It belongs to the peptidase C19 family. UBP8 subfamily. Component of the 1.8 MDa SAGA (Spt-Ada-Gcn5 acetyltransferase) complex, which is composed of 19 subunits tra1, spt7, taf5, ngg1/ada3, sgf73, spt20, spt8, taf12, taf6, hfi1/ada1, ubp8, gcn5, ada2, spt3, sgf29, taf10, taf9, sgf11 and sus1. The SAGA complex is composed of 4 modules, namely the HAT (histone acetyltransferase) module (gcn5, ada2, ngg1/ada3 and sgf29), the DUB (deubiquitinating) module (ubp8, sgf11, sgf73 and sus1), the core or TAF (TBP-associated factor) module (taf5, taf6, taf9, taf10 and taf12), and the Tra1 or SPT (Suppressor of Ty) module (tra1, hfi1/ada1, spt3, spt7, spt8 and spt20). The Tra1/SPT module binds activators, the core module recruits TBP (TATA-binding protein), the HAT module contains the histone H3 acetyltransferase gcn5, and the DUB module comprises the histone H2B deubiquitinase ubp8.

It localises to the nucleus. The protein resides in the nucleoplasm. The catalysed reaction is Thiol-dependent hydrolysis of ester, thioester, amide, peptide and isopeptide bonds formed by the C-terminal Gly of ubiquitin (a 76-residue protein attached to proteins as an intracellular targeting signal).. Histone deubiquitinating enzyme component of the transcription coactivator SAGA complex. SAGA acts as a general cofactor required for essentially all RNA polymerase II transcription. At the promoters, SAGA is required for transcription pre-initiation complex (PIC) recruitment. It influences RNA polymerase II transcriptional activity through different activities such as TBP interaction (via core/TAF module) and promoter selectivity, interaction with transcription activators (via Tra1/SPT module), and chromatin modification through histone acetylation (via HAT module) and deubiquitination (via DUB module). SAGA preferentially acetylates histones H3 (to form H3K9ac, H3K14ac, H3K18ac and H3K23ac) and H2B and deubiquitinates histone H2B. SAGA interacts with DNA via upstream activating sequences (UASs). Within the DUB module, the correctly positioned zinc finger domains of sgf11 and sgf73 are both required to fully activate the ubiquitin hydrolase ubp8. The DUB module is also linked to the splicing efficiency of many transcripts. The sequence is that of Probable ubiquitin carboxyl-terminal hydrolase 8 (ubp8) from Schizosaccharomyces pombe (strain 972 / ATCC 24843) (Fission yeast).